Here is a 144-residue protein sequence, read N- to C-terminus: Endoribonuclease YbeY (144 aa).

Zn(2+) contacts are provided by H104, H108, and H114.

This sequence belongs to the endoribonuclease YbeY family. It depends on Zn(2+) as a cofactor.

The protein resides in the cytoplasm. Single strand-specific metallo-endoribonuclease involved in late-stage 70S ribosome quality control and in maturation of the 3' terminus of the 16S rRNA. This chain is Endoribonuclease YbeY, found in Nitratiruptor sp. (strain SB155-2).